A 165-amino-acid chain; its full sequence is Anaerobic nitrite reductase GLB1 (165 aa).

In terms of domain architecture, Globin spans Val-12–Lys-162. The Homodimerization signature appears at Glu-45–Ser-49. Heme b is bound by residues Ser-55, Lys-69, His-73, Arg-103, Thr-107, and His-108. Positions Asp-115 to Glu-127 match the Homodimerization motif.

It belongs to the plant globin family. In terms of assembly, homodimer. Heme b is required as a cofactor. In vegetative but not in embryonic organs.

It localises to the cytoplasm. Its subcellular location is the nucleus. The enzyme catalyses Fe(III)-heme b-[protein] + nitric oxide + H2O = Fe(II)-heme b-[protein] + nitrite + 2 H(+). In terms of biological role, phytoglobin that reduces nitrite to nitric oxide (NO) under anoxic conditions (e.g. during flooding or in waterlogged soil). May not function as an oxygen storage or transport protein. Has an unusually high affinity for O(2) through an hexacoordinate heme iron because of a very low dissociation constant. The protein is Anaerobic nitrite reductase GLB1 (HB) of Zea mays subsp. parviglumis (Balsas teosinte).